The following is a 500-amino-acid chain: Probable cytosol aminopeptidase (500 aa).

The Mn(2+) site is built by lysine 264 and aspartate 269. Lysine 276 is an active-site residue. Positions 287, 346, and 348 each coordinate Mn(2+). Arginine 350 is an active-site residue.

Belongs to the peptidase M17 family. Mn(2+) serves as cofactor.

It localises to the cytoplasm. The enzyme catalyses Release of an N-terminal amino acid, Xaa-|-Yaa-, in which Xaa is preferably Leu, but may be other amino acids including Pro although not Arg or Lys, and Yaa may be Pro. Amino acid amides and methyl esters are also readily hydrolyzed, but rates on arylamides are exceedingly low.. It catalyses the reaction Release of an N-terminal amino acid, preferentially leucine, but not glutamic or aspartic acids.. Its function is as follows. Presumably involved in the processing and regular turnover of intracellular proteins. Catalyzes the removal of unsubstituted N-terminal amino acids from various peptides. This chain is Probable cytosol aminopeptidase, found in Afipia carboxidovorans (strain ATCC 49405 / DSM 1227 / KCTC 32145 / OM5) (Oligotropha carboxidovorans).